We begin with the raw amino-acid sequence, 447 residues long: ATP-dependent protease ATPase subunit HslU (447 aa).

ATP contacts are provided by residues Ile-18, 60-65 (GVGKTE), Asp-259, Glu-325, and Arg-397.

This sequence belongs to the ClpX chaperone family. HslU subfamily. A double ring-shaped homohexamer of HslV is capped on each side by a ring-shaped HslU homohexamer. The assembly of the HslU/HslV complex is dependent on binding of ATP.

Its subcellular location is the cytoplasm. Its function is as follows. ATPase subunit of a proteasome-like degradation complex; this subunit has chaperone activity. The binding of ATP and its subsequent hydrolysis by HslU are essential for unfolding of protein substrates subsequently hydrolyzed by HslV. HslU recognizes the N-terminal part of its protein substrates and unfolds these before they are guided to HslV for hydrolysis. The protein is ATP-dependent protease ATPase subunit HslU of Burkholderia ambifaria (strain ATCC BAA-244 / DSM 16087 / CCUG 44356 / LMG 19182 / AMMD) (Burkholderia cepacia (strain AMMD)).